Here is a 496-residue protein sequence, read N- to C-terminus: MTPPSLSLTASAPSSSASSDVLVLGARSDDEGVIVLSAGARDGLAAELAAVGFSGGKDELVRLPGAEGGPALAVVGMPDERDEDAFRYAAGTAVRQLAGVQRVALALPTETDAQLGATLEGAALGAYAFTEYREKTKAGVKEPVAEIQVVGRSDEGDALIARAATVAEAAGLVKDLVNAPPLDLYPATFAERVEALAADLPVSVEVWDETRLAADGFGGILGVGQGSARPPRLVKVVYSPDSATRHLALVGKGITFDSGGLSLKPASGMVGMKYDMTGAAAVLAAALAAAKLRLPVRVTAWLCLAENMPSGSAIRPNDVLRIRGGRTVEVLNTDAEGRLVLADGLVAAGEERPDAIVDVATLTGAAEVALGTRYAAVMGSDDLVADVIAAAKASGELLWPMPLAGELRATIASDVADIANANPGNTAGGMLLAGVFLQEFIGRSGDAEDSPRIPWAHLDIAGPAKGPSAPYGFTGKGPSAVSVRALIRLAEDFSGR.

K252 and D257 together coordinate Mn(2+). K264 is an active-site residue. 3 residues coordinate Mn(2+): D275, D334, and E336. R338 is an active-site residue.

Belongs to the peptidase M17 family. It depends on Mn(2+) as a cofactor.

It localises to the cytoplasm. The catalysed reaction is Release of an N-terminal amino acid, Xaa-|-Yaa-, in which Xaa is preferably Leu, but may be other amino acids including Pro although not Arg or Lys, and Yaa may be Pro. Amino acid amides and methyl esters are also readily hydrolyzed, but rates on arylamides are exceedingly low.. It catalyses the reaction Release of an N-terminal amino acid, preferentially leucine, but not glutamic or aspartic acids.. Its function is as follows. Presumably involved in the processing and regular turnover of intracellular proteins. Catalyzes the removal of unsubstituted N-terminal amino acids from various peptides. In Leifsonia xyli subsp. xyli (strain CTCB07), this protein is Probable cytosol aminopeptidase.